Consider the following 297-residue polypeptide: L-ribulose 3-epimerase (297 aa).

Glutamate 147 serves as the catalytic Proton donor/acceptor. Glutamate 147 is a Mn(2+) binding site. Substrate is bound by residues glutamate 153 and 180-183 (DTFH). Mn(2+) is bound by residues aspartate 180 and histidine 206. Arginine 212 contributes to the substrate binding site. Glutamate 241 (proton donor/acceptor) is an active-site residue. Glutamate 241 provides a ligand contact to Mn(2+).

It belongs to the hyi family. Homotetramer. Mn(2+) is required as a cofactor.

It carries out the reaction L-ribulose = L-xylulose. The enzyme catalyses keto-D-tagatose = keto-D-sorbose. The catalysed reaction is D-allulose = keto-D-fructose. Strongly inhibited by Co(2+) and Ni(2+), and slightly inhibited by EDTA. Its function is as follows. Catalyzes the epimerization of various ketoses at the C(3) position. It is able to interconvert L-ribulose with high efficiency. The enzyme can also accept other ketopentoses such as D-psicose and D-tagatose with lower efficiency. In Mesorhizobium japonicum (strain LMG 29417 / CECT 9101 / MAFF 303099) (Mesorhizobium loti (strain MAFF 303099)), this protein is L-ribulose 3-epimerase.